A 121-amino-acid chain; its full sequence is Mu-hexatoxin-Mg1a (121 aa).

The N-terminal stretch at 1–20 (MMTLSPFLLLLIAAVVIGNA) is a signal peptide. Residues 21 to 80 (SEGEVKNEFEERLKDEFKDPSRSEVAEVILLRELEVLEETLFGKEMTSDTEENRNSREKR) constitute a propeptide that is removed on maturation. Cystine bridges form between Cys81-Cys95, Cys88-Cys102, and Cys94-Cys116. At Lys120 the chain carries Lysine amide.

The protein belongs to the neurotoxin 14 (magi-1) family. 09 (magi-1) subfamily. As to expression, expressed by the venom gland.

Its subcellular location is the secreted. Its function is as follows. Insecticidal neurotoxin. Shows competition for site 3 of insect voltage-gated sodium channels (Nav). Induces flaccid paralysis when injected into lepidopteran larvae. Is not toxic to mice when injected intracranially at 20 pmol/g. The sequence is that of Mu-hexatoxin-Mg1a from Macrothele gigas (Japanese funnel web spider).